The sequence spans 216 residues: Oligoribonuclease (216 aa).

The Exonuclease domain occupies 6–171; the sequence is VVWMDCEMTG…ADIKESIREL (166 aa). The active site involves tyrosine 128.

The protein belongs to the oligoribonuclease family.

The protein localises to the cytoplasm. 3'-to-5' exoribonuclease specific for small oligoribonucleotides. This Nocardia farcinica (strain IFM 10152) protein is Oligoribonuclease.